We begin with the raw amino-acid sequence, 203 residues long: Probable GTP-binding protein EngB (203 aa).

Positions 24-199 (DGSEVAFAGR…HTVIETWLGL (176 aa)) constitute an EngB-type G domain. GTP contacts are provided by residues 32-39 (GRSNAGKS), 59-63 (GRTQQ), 77-80 (DLPG), 144-147 (TKAD), and 178-180 (FSS). Residues Ser-39 and Thr-61 each contribute to the Mg(2+) site.

This sequence belongs to the TRAFAC class TrmE-Era-EngA-EngB-Septin-like GTPase superfamily. EngB GTPase family. It depends on Mg(2+) as a cofactor.

Its function is as follows. Necessary for normal cell division and for the maintenance of normal septation. The protein is Probable GTP-binding protein EngB of Xylella fastidiosa (strain 9a5c).